A 62-amino-acid polypeptide reads, in one-letter code: Large ribosomal subunit protein uL30 (62 aa).

This sequence belongs to the universal ribosomal protein uL30 family. Part of the 50S ribosomal subunit.

The chain is Large ribosomal subunit protein uL30 from Dinoroseobacter shibae (strain DSM 16493 / NCIMB 14021 / DFL 12).